Consider the following 321-residue polypeptide: Lipoyl synthase (321 aa).

[4Fe-4S] cluster is bound by residues Cys-68, Cys-73, Cys-79, Cys-94, Cys-98, Cys-101, and Ser-308. Positions 80–297 (FNHGTATFMI…KVLADELGFT (218 aa)) constitute a Radical SAM core domain.

The protein belongs to the radical SAM superfamily. Lipoyl synthase family. It depends on [4Fe-4S] cluster as a cofactor.

It is found in the cytoplasm. The enzyme catalyses [[Fe-S] cluster scaffold protein carrying a second [4Fe-4S](2+) cluster] + N(6)-octanoyl-L-lysyl-[protein] + 2 oxidized [2Fe-2S]-[ferredoxin] + 2 S-adenosyl-L-methionine + 4 H(+) = [[Fe-S] cluster scaffold protein] + N(6)-[(R)-dihydrolipoyl]-L-lysyl-[protein] + 4 Fe(3+) + 2 hydrogen sulfide + 2 5'-deoxyadenosine + 2 L-methionine + 2 reduced [2Fe-2S]-[ferredoxin]. It functions in the pathway protein modification; protein lipoylation via endogenous pathway; protein N(6)-(lipoyl)lysine from octanoyl-[acyl-carrier-protein]: step 2/2. Its function is as follows. Catalyzes the radical-mediated insertion of two sulfur atoms into the C-6 and C-8 positions of the octanoyl moiety bound to the lipoyl domains of lipoate-dependent enzymes, thereby converting the octanoylated domains into lipoylated derivatives. The polypeptide is Lipoyl synthase (Shewanella sp. (strain MR-7)).